The sequence spans 72 residues: uncharacterized protein (72 aa).

This is an uncharacterized protein from Vaccinia virus (strain Copenhagen) (VACV).